The primary structure comprises 304 residues: Flagellin (304 aa).

The protein belongs to the bacterial flagellin family. Interacts with FliW in a 1:1 complex. Forms a 3-way complex of Hag, FliS and FliW, in which Flis and FliW do not directly interact.

The protein resides in the secreted. The protein localises to the bacterial flagellum. Its subcellular location is the cell wall. Flagellin is the subunit which polymerizes to form the filaments of bacterial flagella. Assembly into flagella requires FliW. Acts as a homeostatic autoinhibitory regulator to control its own cytoplasmic levels. Partner switching by flagellin between FliW and CsrA provides a flagellar assembly checkpoint to tightly control the timing of flagellin synthesis. Flagellin binds to assembly factor FliW, freeing translation regulator CsrA to repress translation of the flagellin mRNA. When the flagellar hook is assembled flagellin is secreted, depleting intracellular flagellin, which frees FliW to interact with CsrA. This derepresses flagellin translation and provides protein for flagellar assembly. Once the flagellar filament is completed cytoplasmic flagellin levels rise and CsrA translation repression of flagellin reinitiates. The protein is Flagellin of Bacillus subtilis (strain 168).